The primary structure comprises 429 residues: Glutamate dehydrogenase B (429 aa).

A disordered region spans residues 1-20; the sequence is MAQTPPPESAPSTDSEPETA. Lysine 119 is a catalytic residue.

Belongs to the Glu/Leu/Phe/Val dehydrogenases family. Homohexamer.

The protein is Glutamate dehydrogenase B (gdhB) of Halobacterium salinarum (strain ATCC 700922 / JCM 11081 / NRC-1) (Halobacterium halobium).